The sequence spans 140 residues: PDZ domain-containing protein 11 (140 aa).

Positions 47 to 129 (TVVLKKPPGA…ITMRVRYFPY (83 aa)) constitute a PDZ domain.

It is found in the cytoplasm. The polypeptide is PDZ domain-containing protein 11 (PDZD11) (Gallus gallus (Chicken)).